Reading from the N-terminus, the 38-residue chain is Photosystem II reaction center protein M (38 aa).

A helical membrane pass occupies residues 5–25 (ILGLIATALFIVIPTSFLLIL).

Belongs to the PsbM family. PSII is composed of 1 copy each of membrane proteins PsbA, PsbB, PsbC, PsbD, PsbE, PsbF, PsbH, PsbI, PsbJ, PsbK, PsbL, PsbM, PsbT, PsbX, PsbY, PsbZ, Psb30/Ycf12, at least 3 peripheral proteins of the oxygen-evolving complex and a large number of cofactors. It forms dimeric complexes.

Its subcellular location is the plastid. The protein localises to the cyanelle thylakoid membrane. In terms of biological role, one of the components of the core complex of photosystem II (PSII). PSII is a light-driven water:plastoquinone oxidoreductase that uses light energy to abstract electrons from H(2)O, generating O(2) and a proton gradient subsequently used for ATP formation. It consists of a core antenna complex that captures photons, and an electron transfer chain that converts photonic excitation into a charge separation. This subunit is found at the monomer-monomer interface. This Cyanophora paradoxa protein is Photosystem II reaction center protein M.